The primary structure comprises 971 residues: E3 ubiquitin-protein ligase MIB2 (971 aa).

The MIB/HERC2 1 domain maps to 1–80 (MDLDPHAGVQ…AHDLLLYDNA (80 aa)). A ZZ-type zinc finger spans residues 86–138 (HPNIICDCCKKHGLRGMRWKCRVCFDYDLCTQCYMHNKHDLTHAFERYETSHS). Zn(2+)-binding residues include Cys91, Cys94, Cys106, Cys109, Cys115, Cys118, His124, and His128. An MIB/HERC2 2 domain is found at 149–227 (LPRIPLRGIF…KVDLKCVGEA (79 aa)). A Phosphoserine modification is found at Ser251. ANK repeat units follow at residues 478-507 (QGRTALQVAAYLGQVELVRLLLQARASVDL), 511-540 (EGNTALHYTAMGNQPEATRLLLSAGCGVDA), 544-573 (TRSTALHVAVQRGFLEVVKILCEHGCDVNL), 577-609 (HADTPLHSAISAGAGASSIVEVLTEVPGIDVTA), 613-642 (QGFTLLHHASLKGHVLAVRKILARARQLVD), 647-677 (DGFTALHLAALNNHREVAQVLIREGRCDVNV), 681-710 (KLQSPLHLAVQQAHLGLVPLLVDAGCNVNT), 714-742 (EGDTALHVALQRHQLLPLVADRAGGDPGP), and 783-812 (RGRSPLDLATEGRVLKALQGCAQRFRERQA). RING-type zinc fingers lie at residues 848–883 (CLVCSELALLVLFSPCQHRTVCEECARRMKKCIRCQ) and 927–960 (CPICIDSHIRLVFQCGHGACAPCGAALNACPICR).

As to quaternary structure, interacts with actin monomer. Ubiquitinated. Possibly via autoubiquitination.

The protein resides in the cytoplasm. The protein localises to the endosome. It carries out the reaction S-ubiquitinyl-[E2 ubiquitin-conjugating enzyme]-L-cysteine + [acceptor protein]-L-lysine = [E2 ubiquitin-conjugating enzyme]-L-cysteine + N(6)-ubiquitinyl-[acceptor protein]-L-lysine.. It functions in the pathway protein modification; protein ubiquitination. Functionally, E3 ubiquitin-protein ligase that mediates ubiquitination of Delta receptors, which act as ligands of Notch proteins. Positively regulates the Delta-mediated Notch signaling by ubiquitinating the intracellular domain of Delta, leading to endocytosis of Delta receptors. The polypeptide is E3 ubiquitin-protein ligase MIB2 (Mib2) (Rattus norvegicus (Rat)).